A 479-amino-acid polypeptide reads, in one-letter code: MDFFGPHLLAYFIATLHFLGTLAAIHAVLTVRTAQGSIAWALSLMFMPYLTLIPYLIFGRSTFDAYIQARRQANQEMHTAITALNWRPWVEEALAARNSSAYASLRAMPKLGRMPCLANNEVHLLINGDATFSAIFEAIRNARTAVLFQFFIIHDDELGRQLHALLKEKSAEGVAIYVLYDRIGSHALPHRYVQSLRDAGVQVKAFATRSGWLNRFQVNFRNHRKIVVVDGITGFVGGHNVGDEYLGKKPPLAPWRDTHVQVTGPVVACLQESFAEDWFWAARELPPLILPDAYPEDGVLCQLLASGPADPYETCSLFFVEAIHAATERVWITSPYFIPDEAVFAALRLAVLRGVDVRLLLPSRPDHRIVYAASSLYAIEAVRAGVRVFRYTPGFLHQKVVLVDSEISAIGSANMDNRSFRLNFEVMLLTVDEAFAKEVEHMLLDDFALAHEVSQEESRETRRLQQLGMRVARLISPIL.

Helical transmembrane passes span leucine 8–valine 28 and isoleucine 38–phenylalanine 58. PLD phosphodiesterase domains are found at residues valine 218–tyrosine 245 and threonine 392–serine 419. Catalysis depends on residues histidine 223, lysine 225, aspartate 230, histidine 397, lysine 399, and aspartate 404.

Belongs to the phospholipase D family. Cardiolipin synthase subfamily. ClsA sub-subfamily.

Its subcellular location is the cell inner membrane. The enzyme catalyses 2 a 1,2-diacyl-sn-glycero-3-phospho-(1'-sn-glycerol) = a cardiolipin + glycerol. Its function is as follows. Catalyzes the reversible phosphatidyl group transfer from one phosphatidylglycerol molecule to another to form cardiolipin (CL) (diphosphatidylglycerol) and glycerol. This is Cardiolipin synthase A from Pseudomonas fluorescens (strain SBW25).